The primary structure comprises 192 residues: Thymidine kinase (192 aa).

ATP-binding positions include 9–16 and 87–90; these read SAMNAGKS and DECQ. The active-site Proton acceptor is Glu-88. Zn(2+) is bound by residues Cys-145, Cys-147, Cys-182, and His-185.

It belongs to the thymidine kinase family. As to quaternary structure, homotetramer.

It localises to the cytoplasm. It carries out the reaction thymidine + ATP = dTMP + ADP + H(+). This is Thymidine kinase from Vibrio vulnificus (strain YJ016).